Reading from the N-terminus, the 264-residue chain is 3-methyl-2-oxobutanoate hydroxymethyltransferase (264 aa).

Residues Asp45 and Asp84 each coordinate Mg(2+). 3-methyl-2-oxobutanoate is bound by residues 45 to 46 (DS), Asp84, and Lys113. Residue Glu115 coordinates Mg(2+). Residue Glu182 is the Proton acceptor of the active site.

This sequence belongs to the PanB family. In terms of assembly, homodecamer; pentamer of dimers. Mg(2+) is required as a cofactor.

It localises to the cytoplasm. It carries out the reaction 3-methyl-2-oxobutanoate + (6R)-5,10-methylene-5,6,7,8-tetrahydrofolate + H2O = 2-dehydropantoate + (6S)-5,6,7,8-tetrahydrofolate. It participates in cofactor biosynthesis; (R)-pantothenate biosynthesis; (R)-pantoate from 3-methyl-2-oxobutanoate: step 1/2. Catalyzes the reversible reaction in which hydroxymethyl group from 5,10-methylenetetrahydrofolate is transferred onto alpha-ketoisovalerate to form ketopantoate. This chain is 3-methyl-2-oxobutanoate hydroxymethyltransferase, found in Helicobacter hepaticus (strain ATCC 51449 / 3B1).